A 287-amino-acid polypeptide reads, in one-letter code: Nucleotide-binding protein VV0445 (287 aa).

8–15 is a binding site for ATP; it reads GHSGAGKS. 56–59 is a GTP binding site; the sequence is DVRN.

Belongs to the RapZ-like family.

Displays ATPase and GTPase activities. In Vibrio vulnificus (strain YJ016), this protein is Nucleotide-binding protein VV0445.